A 148-amino-acid chain; its full sequence is Lysozyme C (148 aa).

Residues 1 to 18 form the signal peptide; that stretch reads MKAVIILGLVLLSVTVQG. In terms of domain architecture, C-type lysozyme spans 19 to 148; the sequence is KIFERCELAR…VSQYVQGCGV (130 aa). 4 disulfides stabilise this stretch: cysteine 24–cysteine 146, cysteine 48–cysteine 134, cysteine 83–cysteine 99, and cysteine 95–cysteine 113. Active-site residues include glutamate 53 and aspartate 71.

The protein belongs to the glycosyl hydrolase 22 family. In terms of assembly, monomer.

The protein resides in the secreted. The enzyme catalyses Hydrolysis of (1-&gt;4)-beta-linkages between N-acetylmuramic acid and N-acetyl-D-glucosamine residues in a peptidoglycan and between N-acetyl-D-glucosamine residues in chitodextrins.. In terms of biological role, lysozymes have primarily a bacteriolytic function; those in tissues and body fluids are associated with the monocyte-macrophage system and enhance the activity of immunoagents. This Miopithecus talapoin (Angolan talapoin) protein is Lysozyme C (LYZ).